Reading from the N-terminus, the 509-residue chain is Photosystem II CP47 reaction center protein (509 aa).

The next 6 helical transmembrane spans lie at S21–S36, I101–W115, G140–F156, I203–S218, V237–V252, and S457–R472.

Belongs to the PsbB/PsbC family. PsbB subfamily. PSII is composed of 1 copy each of membrane proteins PsbA, PsbB, PsbC, PsbD, PsbE, PsbF, PsbH, PsbI, PsbJ, PsbK, PsbL, PsbM, PsbT, PsbX, PsbY, PsbZ, Psb30/Ycf12, at least 3 peripheral proteins of the oxygen-evolving complex and a large number of cofactors. It forms dimeric complexes. Binds multiple chlorophylls. PSII binds additional chlorophylls, carotenoids and specific lipids. serves as cofactor.

It localises to the plastid. The protein resides in the chloroplast thylakoid membrane. Functionally, one of the components of the core complex of photosystem II (PSII). It binds chlorophyll and helps catalyze the primary light-induced photochemical processes of PSII. PSII is a light-driven water:plastoquinone oxidoreductase, using light energy to abstract electrons from H(2)O, generating O(2) and a proton gradient subsequently used for ATP formation. In Cicer arietinum (Chickpea), this protein is Photosystem II CP47 reaction center protein.